Consider the following 171-residue polypeptide: MKRQQSFEYDELVACGKGELYGPAFPSLPSDNMLMIDRVIEISSEGGEHGKGFIHAELDINPDLWFFDCHFKGDPVMPGCLGLDAMWQLVGFFLGWQGGEGKGRALGVGEVKFTGQILPTAKKVTYDIQLKRVINRKLVMGVADGRVLVDGKEIYVAKDLKVGLFTDTTNF.

H70 is an active-site residue.

It belongs to the thioester dehydratase family. FabA subfamily. As to quaternary structure, homodimer.

Its subcellular location is the cytoplasm. The enzyme catalyses a (3R)-hydroxyacyl-[ACP] = a (2E)-enoyl-[ACP] + H2O. It catalyses the reaction (3R)-hydroxydecanoyl-[ACP] = (2E)-decenoyl-[ACP] + H2O. It carries out the reaction (2E)-decenoyl-[ACP] = (3Z)-decenoyl-[ACP]. It functions in the pathway lipid metabolism; fatty acid biosynthesis. Its function is as follows. Necessary for the introduction of cis unsaturation into fatty acids. Catalyzes the dehydration of (3R)-3-hydroxydecanoyl-ACP to E-(2)-decenoyl-ACP and then its isomerization to Z-(3)-decenoyl-ACP. Can catalyze the dehydratase reaction for beta-hydroxyacyl-ACPs with saturated chain lengths up to 16:0, being most active on intermediate chain length. In Photobacterium profundum (strain SS9), this protein is 3-hydroxydecanoyl-[acyl-carrier-protein] dehydratase.